A 98-amino-acid chain; its full sequence is Beta-elicitin MGM-beta (98 aa).

Intrachain disulfides connect cysteine 3–cysteine 71, cysteine 27–cysteine 56, and cysteine 51–cysteine 95.

Belongs to the elicitin family.

The protein resides in the secreted. Its function is as follows. Induces local and distal defense responses (incompatible hypersensitive reaction) in plants from the solanaceae and cruciferae families. Elicits leaf necrosis and causes the accumulation of pathogenesis-related proteins. Might interact with the lipidic molecules of the plasma membrane. In Phytophthora megasperma (Potato pink rot fungus), this protein is Beta-elicitin MGM-beta.